A 375-amino-acid polypeptide reads, in one-letter code: Queuine tRNA-ribosyltransferase (375 aa).

Asp89 (proton acceptor) is an active-site residue. Residues 89-93 (DSGGF), Asp143, Gln187, and Gly214 contribute to the substrate site. Residues 245–251 (GVGKPED) are RNA binding. Asp264 functions as the Nucleophile in the catalytic mechanism. The tract at residues 269–273 (TRNAR) is RNA binding; important for wobble base 34 recognition. Residues Cys302, Cys304, Cys307, and His333 each contribute to the Zn(2+) site.

The protein belongs to the queuine tRNA-ribosyltransferase family. In terms of assembly, homodimer. Within each dimer, one monomer is responsible for RNA recognition and catalysis, while the other monomer binds to the replacement base PreQ1. Requires Zn(2+) as cofactor.

The enzyme catalyses 7-aminomethyl-7-carbaguanine + guanosine(34) in tRNA = 7-aminomethyl-7-carbaguanosine(34) in tRNA + guanine. The protein operates within tRNA modification; tRNA-queuosine biosynthesis. Its function is as follows. Catalyzes the base-exchange of a guanine (G) residue with the queuine precursor 7-aminomethyl-7-deazaguanine (PreQ1) at position 34 (anticodon wobble position) in tRNAs with GU(N) anticodons (tRNA-Asp, -Asn, -His and -Tyr). Catalysis occurs through a double-displacement mechanism. The nucleophile active site attacks the C1' of nucleotide 34 to detach the guanine base from the RNA, forming a covalent enzyme-RNA intermediate. The proton acceptor active site deprotonates the incoming PreQ1, allowing a nucleophilic attack on the C1' of the ribose to form the product. After dissociation, two additional enzymatic reactions on the tRNA convert PreQ1 to queuine (Q), resulting in the hypermodified nucleoside queuosine (7-(((4,5-cis-dihydroxy-2-cyclopenten-1-yl)amino)methyl)-7-deazaguanosine). This is Queuine tRNA-ribosyltransferase from Klebsiella pneumoniae subsp. pneumoniae (strain ATCC 700721 / MGH 78578).